Reading from the N-terminus, the 691-residue chain is Elongation factor G (691 aa).

The region spanning 8–282 (HMVRNIGIAA…AVVDYLPAPD (275 aa)) is the tr-type G domain. GTP-binding positions include 17–24 (AHIDAGKT), 81–85 (DTPGH), and 135–138 (NKMD).

It belongs to the TRAFAC class translation factor GTPase superfamily. Classic translation factor GTPase family. EF-G/EF-2 subfamily.

It localises to the cytoplasm. Its function is as follows. Catalyzes the GTP-dependent ribosomal translocation step during translation elongation. During this step, the ribosome changes from the pre-translocational (PRE) to the post-translocational (POST) state as the newly formed A-site-bound peptidyl-tRNA and P-site-bound deacylated tRNA move to the P and E sites, respectively. Catalyzes the coordinated movement of the two tRNA molecules, the mRNA and conformational changes in the ribosome. The chain is Elongation factor G from Campylobacter hominis (strain ATCC BAA-381 / DSM 21671 / CCUG 45161 / LMG 19568 / NCTC 13146 / CH001A).